The following is a 228-amino-acid chain: 3-oxoadipate CoA-transferase subunit A (228 aa).

25-31 (GGFGTAG) is a binding site for CoA.

Belongs to the 3-oxoacid CoA-transferase subunit A family. As to quaternary structure, heterodimer.

It catalyses the reaction 3-oxoadipate + succinyl-CoA = 3-oxoadipyl-CoA + succinate. The protein operates within aromatic compound metabolism; beta-ketoadipate pathway; acetyl-CoA and succinyl-CoA from 3-oxoadipate: step 1/2. The protein is 3-oxoadipate CoA-transferase subunit A (pcaI) of Acinetobacter baylyi (strain ATCC 33305 / BD413 / ADP1).